Here is a 359-residue protein sequence, read N- to C-terminus: Acyl-CoA desaturase 3 (359 aa).

The interval 1-34 (MPGHLLQEEMTPSYTTTTTITAPPSGSLQNGREK) is disordered. At 1–72 (MPGHLLQEEM…EGPPPKLEYV (72 aa)) the chain is on the cytoplasmic side. Over residues 11–27 (TPSYTTTTTITAPPSGS) the composition is skewed to low complexity. The helical transmembrane segment at 73-93 (WRNIILMALLHVGALYGITLV) threads the bilayer. Asn-75 contacts substrate. Residues 94-97 (PSCK) are Lumenal-facing. The chain crosses the membrane as a helical span at residues 98 to 118 (LYTCLFAFVYYVISIEGIGAG). Over 119–217 (VHRLWSHRTY…EKLVMFQRRY (99 aa)) the chain is Cytoplasmic. 2 residues coordinate Fe cation: His-120 and His-125. Residues 120-125 (HRLWSH) carry the Histidine box-1 motif. Positions 148, 155, and 156 each coordinate substrate. The Fe cation site is built by His-157, His-160, and His-161. A Histidine box-2 motif is present at residues 157-161 (HRAHH). Arg-188 and Lys-189 together coordinate substrate. Residue Ser-203 is modified to Phosphoserine. A helical membrane pass occupies residues 218–237 (YKPGILLMCFILPTLVPWYC). At 238–241 (WGET) the chain is on the lumenal side. The chain crosses the membrane as a helical span at residues 242–263 (FLNSFYVATLLRYAVVLNATWL). Trp-262 is a binding site for substrate. Topologically, residues 264–359 (VNSAAHLYGY…RTGDGSHKSG (96 aa)) are cytoplasmic. 4 residues coordinate Fe cation: His-269, His-298, His-301, and His-302. Residues 298-302 (HNYHH) carry the Histidine box-3 motif.

The protein belongs to the fatty acid desaturase type 1 family. It depends on Fe(2+) as a cofactor. In terms of tissue distribution, detected in skin, but at lower levels compared to Scd1. Detected in the middlle part of the sebaceous gland, but not in hair follicle. Not detected in liver and brain.

It is found in the endoplasmic reticulum membrane. Its subcellular location is the microsome membrane. It carries out the reaction hexadecanoyl-CoA + 2 Fe(II)-[cytochrome b5] + O2 + 2 H(+) = (9Z)-hexadecenoyl-CoA + 2 Fe(III)-[cytochrome b5] + 2 H2O. Stearoyl-CoA desaturase that utilizes O(2) and electrons from reduced cytochrome b5 to introduce the first double bond into saturated fatty acyl-CoA substrates. Catalyzes the insertion of a cis double bond at the delta-9 position into fatty acyl-CoA substrates including palmitoyl-CoA. Has a strong preference for saturated fatty acids with chain lengths of 14 or 16 carbon atoms (C14:0 and C16:0), and has only very low activity with stearatate (C18:0). Required for the biosynthesis of membrane phospholipids, cholesterol esters and triglycerides. The sequence is that of Acyl-CoA desaturase 3 from Mus musculus (Mouse).